A 177-amino-acid polypeptide reads, in one-letter code: SPbeta prophage-derived uncharacterized protein YopI (177 aa).

A helical membrane pass occupies residues 11-31 (FEGIIGALLGVIVTLILTHIL).

The protein resides in the cell membrane. The sequence is that of SPbeta prophage-derived uncharacterized protein YopI (yopI) from Bacillus subtilis (strain 168).